Here is a 279-residue protein sequence, read N- to C-terminus: Vacuolar iron transporter cccA (279 aa).

Residues 1-44 (MLGGRHSHWSPQDLEEQAFSPYGTFPPSPTESTETSSSISSTRP) are disordered. Positions 30–44 (TESTETSSSISSTRP) are enriched in low complexity. 5 helical membrane passes run 55–75 (ILGLSDGLTVPFALSAGLSAL), 80–100 (VVVVGGLAELVAGAISMGLGG), 185–205 (ITLALGYFIGGFIPLIPYFMV), 208–228 (VLVALYYSIGIMIFTLLVFGY), and 243–263 (IVAGIKGGLQMVVVGGLAAGA).

This sequence belongs to the CCC1 family.

It localises to the vacuole membrane. It carries out the reaction Fe(2+)(in) = Fe(2+)(out). Vacuolar iron transporter involved in the transfer of iron from the cytosol to the vacuole for intracellular iron storage. Plays an essential role in iron detoxification during high iron conditions. The polypeptide is Vacuolar iron transporter cccA (Arthroderma benhamiae (strain ATCC MYA-4681 / CBS 112371) (Trichophyton mentagrophytes)).